The following is a 396-amino-acid chain: KiSS-1 receptor (396 aa).

Over 1 to 43 the chain is Extracellular; the sequence is MATEATLAPNVTWWAPSNASGCPGCGVNASDDPGSAPRPLDAW. 3 N-linked (GlcNAc...) asparagine glycosylation sites follow: Asn10, Asn18, and Asn28. The chain crosses the membrane as a helical span at residues 44–66; it reads LVPLFFATLMLLGLVGNSLVIYV. Topologically, residues 67–78 are cytoplasmic; sequence ICRHKHMQTVTN. The chain crosses the membrane as a helical span at residues 79–101; sequence FYIANLAATDVTFLLCCVPFTAL. At 102–116 the chain is on the extracellular side; that stretch reads LYPLPAWVLGDFMCK. Cys115 and Cys191 are disulfide-bonded. The helical transmembrane segment at 117–138 threads the bilayer; the sequence is FVNYIQQVSVQATCATLTAMSV. Topologically, residues 139 to 157 are cytoplasmic; sequence DRWYVTVFPLRALHRRTPR. Residues 158–180 form a helical membrane-spanning segment; the sequence is LALAVSLSIWVGSAAVSAPVLAL. The Extracellular portion of the chain corresponds to 181-203; it reads HRLSPGPRTYCSEAFPSRALERA. The helical transmembrane segment at 204 to 224 threads the bilayer; that stretch reads FALYNLLALYLLPLLATCACY. Residues 225–260 are Cytoplasmic-facing; sequence GAMLRHLGRAAVRPAPTDGALQGQLLAQRAGAVRTK. The helical transmembrane segment at 261 to 283 threads the bilayer; that stretch reads VSRLVAAVVLLFAACWGPIQLFL. Residues 284 to 305 are Extracellular-facing; it reads VLQALGPSGAWHPRSYAAYAVK. The helical transmembrane segment at 306-330 threads the bilayer; it reads IWAHCMSYSNSALNPLLYAFLGSHF. Topologically, residues 331–396 are cytoplasmic; sequence RQAFCRVCPC…CAQSERTASL (66 aa). The tract at residues 349–396 is disordered; it reads HTSAHSDRAATHTVPHSRAAHPVRIRSPEPGNPVVRSPCAQSERTASL. Polar residues predominate over residues 387–396; the sequence is CAQSERTASL.

The protein belongs to the G-protein coupled receptor 1 family. In terms of tissue distribution, highest level in the heart and 15- and 17-day embryos. Low level in other tissues. Colocalized with gonadotropin-releasing hormone (GnRH) neurons in the hypothalamus.

The protein resides in the cell membrane. Its function is as follows. Receptor for metastin (kisspeptin-52 or kp-52), a C-terminally amidated peptide of KiSS1. KiSS1 is a metastasis suppressor protein. Activation of the receptor inhibits cell proliferation and cell migration, key characteristics of tumor metastasis. The receptor is essential for normal gonadotropin-released hormone physiology and for puberty. The hypothalamic KiSS1/KISS1R system is a pivotal factor in central regulation of the gonadotropic axis at puberty and in adulthood. Analysis of the transduction pathways activated by the receptor identifies coupling to phospholipase C and intracellular calcium release through pertussis toxin-insensitive G(q) proteins. The protein is KiSS-1 receptor (Kiss1r) of Mus musculus (Mouse).